Consider the following 180-residue polypeptide: NADH-quinone oxidoreductase subunit I (180 aa).

4Fe-4S ferredoxin-type domains follow at residues 44–74 (LNRY…VEGA) and 90–119 (RVYQ…MTTE). [4Fe-4S] cluster contacts are provided by cysteine 54, cysteine 57, cysteine 60, cysteine 64, cysteine 99, cysteine 102, cysteine 105, and cysteine 109. The interval 145-180 (MQAPPHDMAPGKTDDDYYLGNVTPITPVPSGTEDAR) is disordered.

The protein belongs to the complex I 23 kDa subunit family. NDH-1 is composed of 14 different subunits. Subunits NuoA, H, J, K, L, M, N constitute the membrane sector of the complex. The cofactor is [4Fe-4S] cluster.

It localises to the cell membrane. The catalysed reaction is a quinone + NADH + 5 H(+)(in) = a quinol + NAD(+) + 4 H(+)(out). Its function is as follows. NDH-1 shuttles electrons from NADH, via FMN and iron-sulfur (Fe-S) centers, to quinones in the respiratory chain. The immediate electron acceptor for the enzyme in this species is believed to be menaquinone. Couples the redox reaction to proton translocation (for every two electrons transferred, four hydrogen ions are translocated across the cytoplasmic membrane), and thus conserves the redox energy in a proton gradient. The polypeptide is NADH-quinone oxidoreductase subunit I (Mycolicibacterium smegmatis (strain ATCC 700084 / mc(2)155) (Mycobacterium smegmatis)).